Here is a 146-residue protein sequence, read N- to C-terminus: VHLSDGEKNAISTAWGKVHAAEVGAEALGRLLVVYPWTQRFFDSFGDLSSASAVMGNAKVKAHGKKVIDSFSNGLKHLDNLKGTFASLSELHCDKLHVDPENFKLLGNMIVIVMAHHLGKDFTPEAQAAFQKVVAGVANALAHKYH.

Val1 carries the post-translational modification N-acetylvaline. Residues 2-146 form the Globin domain; the sequence is HLSDGEKNAI…VANALAHKYH (145 aa). Ser44 bears the Phosphoserine mark. Lys59 is modified (N6-acetyllysine). His63 serves as a coordination point for heme b. Lys82 bears the N6-acetyllysine mark. His92 is a binding site for heme b. Cys93 is modified (S-nitrosocysteine). Lys144 carries the N6-acetyllysine modification.

Belongs to the globin family. As to quaternary structure, heterotetramer of two alpha chains and two beta chains. In terms of tissue distribution, red blood cells.

Its function is as follows. Involved in oxygen transport from the lung to the various peripheral tissues. This Spermophilus citellus (European ground squirrel) protein is Hemoglobin subunit beta (HBB).